Here is a 101-residue protein sequence, read N- to C-terminus: Small ribosomal subunit protein uS14 (101 aa).

Belongs to the universal ribosomal protein uS14 family. As to quaternary structure, part of the 30S ribosomal subunit. Contacts proteins S3 and S10.

Its function is as follows. Binds 16S rRNA, required for the assembly of 30S particles and may also be responsible for determining the conformation of the 16S rRNA at the A site. The protein is Small ribosomal subunit protein uS14 of Methylibium petroleiphilum (strain ATCC BAA-1232 / LMG 22953 / PM1).